The following is a 396-amino-acid chain: Orotidine 5'-phosphate decarboxylase (396 aa).

Substrate is bound by residues Asp46, 68–70, 103–112, Tyr346, and Arg365; these read KTH and DRKFVDIGST. Catalysis depends on Lys105, which acts as the Proton donor.

This sequence belongs to the OMP decarboxylase family.

The catalysed reaction is orotidine 5'-phosphate + H(+) = UMP + CO2. Its pathway is pyrimidine metabolism; UMP biosynthesis via de novo pathway; UMP from orotate: step 2/2. This Sordaria macrospora (strain ATCC MYA-333 / DSM 997 / K(L3346) / K-hell) protein is Orotidine 5'-phosphate decarboxylase (URA3).